The chain runs to 339 residues: D-erythrose-4-phosphate dehydrogenase (339 aa).

Position 12–13 (12–13 (RI)) interacts with NAD(+). Residues 154–156 (SCT), Arg200, 213–214 (TK), and Arg236 each bind substrate. Cys155 serves as the catalytic Nucleophile. Asn318 is an NAD(+) binding site.

The protein belongs to the glyceraldehyde-3-phosphate dehydrogenase family. Epd subfamily. Homotetramer.

The protein localises to the cytoplasm. It carries out the reaction D-erythrose 4-phosphate + NAD(+) + H2O = 4-phospho-D-erythronate + NADH + 2 H(+). It functions in the pathway cofactor biosynthesis; pyridoxine 5'-phosphate biosynthesis; pyridoxine 5'-phosphate from D-erythrose 4-phosphate: step 1/5. Its function is as follows. Catalyzes the NAD-dependent conversion of D-erythrose 4-phosphate to 4-phosphoerythronate. This Proteus mirabilis (strain HI4320) protein is D-erythrose-4-phosphate dehydrogenase.